We begin with the raw amino-acid sequence, 161 residues long: Probable ubiquitin-conjugating enzyme E2 17 (161 aa).

A UBC core domain is found at 15 to 161 (IATNRLQKEF…TRWRFHDDKV (147 aa)). Residue Cys99 is the Glycyl thioester intermediate of the active site.

This sequence belongs to the ubiquitin-conjugating enzyme family.

It carries out the reaction S-ubiquitinyl-[E1 ubiquitin-activating enzyme]-L-cysteine + [E2 ubiquitin-conjugating enzyme]-L-cysteine = [E1 ubiquitin-activating enzyme]-L-cysteine + S-ubiquitinyl-[E2 ubiquitin-conjugating enzyme]-L-cysteine.. Its pathway is protein modification; protein ubiquitination. Functionally, accepts the ubiquitin from the E1 complex and catalyzes its covalent attachment to other proteins. The chain is Probable ubiquitin-conjugating enzyme E2 17 (UBC17) from Arabidopsis thaliana (Mouse-ear cress).